Here is a 117-residue protein sequence, read N- to C-terminus: Serine rich endogenous peptide 5 (117 aa).

Positions 1–31 (MATKTSNFVSLRVSLFILLLFISSQVAIADA) are cleaved as a signal peptide. The short motif at 41–55 (LQIVRRSRSQRGRQY) is the SCOOP motif element. Residues 42 to 51 (QIVRRSRSQR) are compositionally biased toward basic residues. The interval 42–117 (QIVRRSRSQR…LPYASSPTST (76 aa)) is disordered. A SxS motif essential for MIK2 binding motif is present at residues 47–49 (SRS). The segment covering 60 to 84 (LRVPPPPPPPLPQMPSAATPPPMPQ) has biased composition (pro residues).

In terms of assembly, interacts with MIK2 (via extracellular leucine-rich repeat domain); this interaction triggers the formation of complex between MIK2 and the BAK1/SERK3 and SERK4 coreceptors, and subsequent BAK1 activation by phosphorylation.

Its subcellular location is the cell membrane. It localises to the secreted. It is found in the extracellular space. The protein resides in the apoplast. In terms of biological role, brassicaceae-specific phytocytokine (plant endogenous peptide released into the apoplast) perceived by MIK2 in a BAK1/SERK3 and SERK4 coreceptors-dependent manner, that modulates various physiological and antimicrobial processes including growth prevention and reactive oxygen species (ROS) response regulation. The sequence is that of Serine rich endogenous peptide 5 from Arabidopsis thaliana (Mouse-ear cress).